Here is a 446-residue protein sequence, read N- to C-terminus: ATP-dependent protease ATPase subunit HslU (446 aa).

ATP contacts are provided by residues Ile18, 60–65, Asp259, Glu324, and Arg396; that span reads GVGKTE.

It belongs to the ClpX chaperone family. HslU subfamily. As to quaternary structure, a double ring-shaped homohexamer of HslV is capped on each side by a ring-shaped HslU homohexamer. The assembly of the HslU/HslV complex is dependent on binding of ATP.

Its subcellular location is the cytoplasm. In terms of biological role, ATPase subunit of a proteasome-like degradation complex; this subunit has chaperone activity. The binding of ATP and its subsequent hydrolysis by HslU are essential for unfolding of protein substrates subsequently hydrolyzed by HslV. HslU recognizes the N-terminal part of its protein substrates and unfolds these before they are guided to HslV for hydrolysis. The chain is ATP-dependent protease ATPase subunit HslU from Vibrio atlanticus (strain LGP32) (Vibrio splendidus (strain Mel32)).